A 305-amino-acid chain; its full sequence is Ribosomal RNA small subunit methyltransferase H (305 aa).

Residues 47–49 (GGH), aspartate 66, phenylalanine 93, aspartate 108, and glutamine 115 each bind S-adenosyl-L-methionine. Residues 280–305 (ASAEEQERNPRSRSAKLRIARKRSES) form a disordered region. Positions 290-305 (RSRSAKLRIARKRSES) are enriched in basic residues.

This sequence belongs to the methyltransferase superfamily. RsmH family.

It is found in the cytoplasm. The enzyme catalyses cytidine(1402) in 16S rRNA + S-adenosyl-L-methionine = N(4)-methylcytidine(1402) in 16S rRNA + S-adenosyl-L-homocysteine + H(+). Functionally, specifically methylates the N4 position of cytidine in position 1402 (C1402) of 16S rRNA. In Synechococcus sp. (strain WH7803), this protein is Ribosomal RNA small subunit methyltransferase H.